Here is a 206-residue protein sequence, read N- to C-terminus: Small ribosomal subunit protein uS4 (206 aa).

The region spanning 96–156 (QRLDNVVYRM…EKSKTQARII (61 aa)) is the S4 RNA-binding domain.

Belongs to the universal ribosomal protein uS4 family. As to quaternary structure, part of the 30S ribosomal subunit. Contacts protein S5. The interaction surface between S4 and S5 is involved in control of translational fidelity.

In terms of biological role, one of the primary rRNA binding proteins, it binds directly to 16S rRNA where it nucleates assembly of the body of the 30S subunit. Functionally, with S5 and S12 plays an important role in translational accuracy. This is Small ribosomal subunit protein uS4 from Pseudoalteromonas translucida (strain TAC 125).